A 136-amino-acid polypeptide reads, in one-letter code: Large ribosomal subunit protein uL16c (136 aa).

The protein belongs to the universal ribosomal protein uL16 family. Part of the 50S ribosomal subunit.

The protein localises to the plastid. It localises to the chloroplast. The sequence is that of Large ribosomal subunit protein uL16c from Guizotia abyssinica (Niger).